Reading from the N-terminus, the 373-residue chain is Molybdenum import ATP-binding protein ModC (373 aa).

Residues 4-240 (LTPPTIRAAF…PKLPLAIARD (237 aa)) enclose the ABC transporter domain. 38–45 (GPSGCGKS) serves as a coordination point for ATP. The Mop domain maps to 299-369 (ASSILNAIAA…IKGVALAPGR (71 aa)).

The protein belongs to the ABC transporter superfamily. Molybdate importer (TC 3.A.1.8) family. In terms of assembly, the complex is composed of two ATP-binding proteins (ModC), two transmembrane proteins (ModB) and a solute-binding protein (ModA).

The protein resides in the cell inner membrane. It carries out the reaction molybdate(out) + ATP + H2O = molybdate(in) + ADP + phosphate + H(+). In terms of biological role, part of the ABC transporter complex ModABC involved in molybdenum import. Responsible for energy coupling to the transport system. This is Molybdenum import ATP-binding protein ModC from Rhodopseudomonas palustris (strain ATCC BAA-98 / CGA009).